The primary structure comprises 379 residues: 2-dehydropantoate 2-reductase (379 aa).

Residues 13–18 (GLGAMG) and Asn119 each bind NADP(+). Residue Asn119 coordinates substrate. Residue Lys224 is the Proton donor of the active site. Residues Asn228, Asn232, and Ser316 each contribute to the substrate site. Glu328 is an NADP(+) binding site.

The protein belongs to the ketopantoate reductase family.

The enzyme catalyses (R)-pantoate + NADP(+) = 2-dehydropantoate + NADPH + H(+). It participates in cofactor biosynthesis; (R)-pantothenate biosynthesis; (R)-pantoate from 3-methyl-2-oxobutanoate: step 2/2. In terms of biological role, catalyzes the NADPH-dependent reduction of ketopantoate into pantoic acid. This chain is 2-dehydropantoate 2-reductase (PAN5), found in Saccharomyces cerevisiae (strain ATCC 204508 / S288c) (Baker's yeast).